A 194-amino-acid chain; its full sequence is Gonadal protein gdl (194 aa).

Belongs to the gonadal family. In stage 6-14 egg chamber nurse cells and oocytes of adult females and spermatocyte cysts and bundles of maturing sperm of larval, pupal and adult males.

This chain is Gonadal protein gdl (gdl), found in Drosophila melanogaster (Fruit fly).